The primary structure comprises 207 residues: dTTP/UTP pyrophosphatase (207 aa).

Residue aspartate 79 is the Proton acceptor of the active site.

This sequence belongs to the Maf family. YhdE subfamily. The cofactor is a divalent metal cation.

The protein resides in the cytoplasm. It carries out the reaction dTTP + H2O = dTMP + diphosphate + H(+). It catalyses the reaction UTP + H2O = UMP + diphosphate + H(+). Functionally, nucleoside triphosphate pyrophosphatase that hydrolyzes dTTP and UTP. May have a dual role in cell division arrest and in preventing the incorporation of modified nucleotides into cellular nucleic acids. This Rhodopseudomonas palustris (strain BisB18) protein is dTTP/UTP pyrophosphatase.